Consider the following 113-residue polypeptide: Large ribosomal subunit protein uL22 (113 aa).

Belongs to the universal ribosomal protein uL22 family. In terms of assembly, part of the 50S ribosomal subunit.

Its function is as follows. This protein binds specifically to 23S rRNA; its binding is stimulated by other ribosomal proteins, e.g. L4, L17, and L20. It is important during the early stages of 50S assembly. It makes multiple contacts with different domains of the 23S rRNA in the assembled 50S subunit and ribosome. Functionally, the globular domain of the protein is located near the polypeptide exit tunnel on the outside of the subunit, while an extended beta-hairpin is found that lines the wall of the exit tunnel in the center of the 70S ribosome. In Syntrophomonas wolfei subsp. wolfei (strain DSM 2245B / Goettingen), this protein is Large ribosomal subunit protein uL22.